The chain runs to 89 residues: Small ribosomal subunit protein uS15 (89 aa).

It belongs to the universal ribosomal protein uS15 family. In terms of assembly, part of the 30S ribosomal subunit. Forms a bridge to the 50S subunit in the 70S ribosome, contacting the 23S rRNA.

Its function is as follows. One of the primary rRNA binding proteins, it binds directly to 16S rRNA where it helps nucleate assembly of the platform of the 30S subunit by binding and bridging several RNA helices of the 16S rRNA. Forms an intersubunit bridge (bridge B4) with the 23S rRNA of the 50S subunit in the ribosome. The protein is Small ribosomal subunit protein uS15 of Hyphomonas neptunium (strain ATCC 15444).